A 391-amino-acid polypeptide reads, in one-letter code: Casein kinase II subunit alpha (391 aa).

Positions 36–41 (QDDYQL) are interaction with beta subunit. Residues 39–324 (YQLVRKLGRG…AREAMEHPYF (286 aa)) form the Protein kinase domain. Residues 45-53 (LGRGKYSEV) and K68 contribute to the ATP site. D156 (proton acceptor) is an active-site residue. Polar residues predominate over residues 335–346 (GSSNMPGGSTPV). The interval 335-363 (GSSNMPGGSTPVSSASMMSGISSVPTPSP) is disordered. Positions 347-357 (SSASMMSGISS) are enriched in low complexity.

The protein belongs to the protein kinase superfamily. Ser/Thr protein kinase family. CK2 subfamily. As to quaternary structure, tetramer composed of an alpha chain, an alpha' and two beta chains. Interacts with RNPS1.

Its subcellular location is the nucleus. The enzyme catalyses L-seryl-[protein] + ATP = O-phospho-L-seryl-[protein] + ADP + H(+). It carries out the reaction L-threonyl-[protein] + ATP = O-phospho-L-threonyl-[protein] + ADP + H(+). In terms of biological role, catalytic subunit of a constitutively active serine/threonine-protein kinase complex that phosphorylates a large number of substrates containing acidic residues C-terminal to the phosphorylated serine or threonine. Regulates numerous cellular processes, such as cell cycle progression, apoptosis and transcription, as well as viral infection. May act as a regulatory node which integrates and coordinates numerous signals leading to an appropriate cellular response. During mitosis, functions as a component of the p53/TP53-dependent spindle assembly checkpoint (SAC) that maintains cyclin-B-CDK1 activity and G2 arrest in response to spindle damage. Can also negatively regulate apoptosis. Phosphorylates the caspases CASP9 and CASP2 and the apoptotic regulator NOL3. Phosphorylation protects CASP9 from cleavage and activation by CASP8, and inhibits the dimerization of CASP2 and activation of CASP8. Plays an important role in the circadian clock function by phosphorylating BMAL1. In Gallus gallus (Chicken), this protein is Casein kinase II subunit alpha (CSNK2A1).